Here is a 227-residue protein sequence, read N- to C-terminus: 2-C-methyl-D-erythritol 4-phosphate cytidylyltransferase (227 aa).

The protein belongs to the IspD/TarI cytidylyltransferase family. IspD subfamily.

It carries out the reaction 2-C-methyl-D-erythritol 4-phosphate + CTP + H(+) = 4-CDP-2-C-methyl-D-erythritol + diphosphate. The protein operates within isoprenoid biosynthesis; isopentenyl diphosphate biosynthesis via DXP pathway; isopentenyl diphosphate from 1-deoxy-D-xylulose 5-phosphate: step 2/6. In terms of biological role, catalyzes the formation of 4-diphosphocytidyl-2-C-methyl-D-erythritol from CTP and 2-C-methyl-D-erythritol 4-phosphate (MEP). In Petrotoga mobilis (strain DSM 10674 / SJ95), this protein is 2-C-methyl-D-erythritol 4-phosphate cytidylyltransferase.